A 285-amino-acid chain; its full sequence is Undecaprenyl-diphosphatase (285 aa).

7 helical membrane-spanning segments follow: residues 12-34 (IVIAILQGATELFPVSSLGHAVI), 49-69 (IFLPFLVMLHLGTAIALLVYF), 93-113 (IHILALLVVATIPAVIIGGLL), 120-140 (LFGTARYAAIFLFLNGLLLLL), 159-179 (LTYADAAIIGLWQCLAFLPGI), 234-254 (VATIGAMVAAVTALASTAFLM), and 263-283 (WALSPFGYYCVLAGAVSFFIL).

It belongs to the UppP family.

The protein localises to the cell inner membrane. It catalyses the reaction di-trans,octa-cis-undecaprenyl diphosphate + H2O = di-trans,octa-cis-undecaprenyl phosphate + phosphate + H(+). In terms of biological role, catalyzes the dephosphorylation of undecaprenyl diphosphate (UPP). Confers resistance to bacitracin. The chain is Undecaprenyl-diphosphatase from Gluconacetobacter diazotrophicus (strain ATCC 49037 / DSM 5601 / CCUG 37298 / CIP 103539 / LMG 7603 / PAl5).